The sequence spans 98 residues: Class II hydrophobin 5 (98 aa).

The N-terminal stretch at 1–17 (MQFSLALVTLLATAVSA) is a signal peptide. 4 disulfides stabilise this stretch: cysteine 30–cysteine 78, cysteine 39–cysteine 69, cysteine 40–cysteine 52, and cysteine 79–cysteine 90.

This sequence belongs to the cerato-ulmin hydrophobin family.

The protein resides in the secreted. It localises to the cell wall. In terms of biological role, aerial growth, conidiation, and dispersal of filamentous fungi in the environment rely upon a capability of their secreting small amphipathic proteins called hydrophobins (HPBs) with low sequence identity. Class I can self-assemble into an outermost layer of rodlet bundles on aerial cell surfaces, conferring cellular hydrophobicity that supports fungal growth, development and dispersal; whereas Class II form highly ordered films at water-air interfaces through intermolecular interactions but contribute nothing to the rodlet structure. Does not seem to be important for the ability to cause seedling disease. In Gibberella moniliformis (Maize ear and stalk rot fungus), this protein is Class II hydrophobin 5.